The primary structure comprises 602 residues: Elongation factor 4 (602 aa).

The region spanning 7-196 is the tr-type G domain; sequence SKIRNFCIIA…HPQNEIKSPT (190 aa). GTP contacts are provided by residues 19 to 24 and 136 to 139; these read DHGKST and NKVD.

Belongs to the TRAFAC class translation factor GTPase superfamily. Classic translation factor GTPase family. LepA subfamily.

The protein resides in the cell inner membrane. It catalyses the reaction GTP + H2O = GDP + phosphate + H(+). In terms of biological role, required for accurate and efficient protein synthesis under certain stress conditions. May act as a fidelity factor of the translation reaction, by catalyzing a one-codon backward translocation of tRNAs on improperly translocated ribosomes. Back-translocation proceeds from a post-translocation (POST) complex to a pre-translocation (PRE) complex, thus giving elongation factor G a second chance to translocate the tRNAs correctly. Binds to ribosomes in a GTP-dependent manner. The polypeptide is Elongation factor 4 (Prochlorococcus marinus (strain MIT 9515)).